Reading from the N-terminus, the 467-residue chain is Dimethylamine methyltransferase MtbB1 (467 aa).

Residue Pyl356 is a non-standard amino acid, pyrrolysine.

It belongs to the dimethylamine methyltransferase family.

It carries out the reaction Co(I)-[dimethylamine-specific corrinoid protein] + dimethylamine + H(+) = methyl-Co(III)-[dimethylamine-specific corrinoid protein] + methylamine. It participates in one-carbon metabolism; methanogenesis from dimethylamine. Catalyzes the transfer of a methyl group from dimethylamine to the corrinoid cofactor of MtbC. In Methanosarcina acetivorans (strain ATCC 35395 / DSM 2834 / JCM 12185 / C2A), this protein is Dimethylamine methyltransferase MtbB1 (mtbB1).